The sequence spans 1033 residues: Isoleucine--tRNA ligase (1033 aa).

The short motif at 47 to 57 is the 'HIGH' region element; the sequence is PTANGLPHVGH. Residues 590–594 carry the 'KMSKS' region motif; the sequence is KMSKS. Lysine 593 provides a ligand contact to ATP.

This sequence belongs to the class-I aminoacyl-tRNA synthetase family. IleS type 2 subfamily. As to quaternary structure, monomer. It depends on Zn(2+) as a cofactor.

It is found in the cytoplasm. The catalysed reaction is tRNA(Ile) + L-isoleucine + ATP = L-isoleucyl-tRNA(Ile) + AMP + diphosphate. Catalyzes the attachment of isoleucine to tRNA(Ile). As IleRS can inadvertently accommodate and process structurally similar amino acids such as valine, to avoid such errors it has two additional distinct tRNA(Ile)-dependent editing activities. One activity is designated as 'pretransfer' editing and involves the hydrolysis of activated Val-AMP. The other activity is designated 'posttransfer' editing and involves deacylation of mischarged Val-tRNA(Ile). This chain is Isoleucine--tRNA ligase, found in Bacillus thuringiensis (strain Al Hakam).